A 224-amino-acid chain; its full sequence is Ribonuclease 3 (224 aa).

Residues 4-126 (LDRLQRQISY…IIGAISLDSS (123 aa)) form the RNase III domain. Residue E39 coordinates Mg(2+). The active site involves D43. Residues D112 and E115 each coordinate Mg(2+). E115 is a catalytic residue. Positions 153–223 (DPKTRLQEYL…AEQILTALEI (71 aa)) constitute a DRBM domain.

It belongs to the ribonuclease III family. As to quaternary structure, homodimer. Mg(2+) serves as cofactor.

It is found in the cytoplasm. The enzyme catalyses Endonucleolytic cleavage to 5'-phosphomonoester.. In terms of biological role, digests double-stranded RNA. Involved in the processing of primary rRNA transcript to yield the immediate precursors to the large and small rRNAs (23S and 16S). Processes some mRNAs, and tRNAs when they are encoded in the rRNA operon. Processes pre-crRNA and tracrRNA of type II CRISPR loci if present in the organism. The protein is Ribonuclease 3 of Mannheimia succiniciproducens (strain KCTC 0769BP / MBEL55E).